Consider the following 257-residue polypeptide: MLTLYGREVSSRLLLGTARYPSPAVLADAVRASNTDILTISLRREMAGAKKGGQFFELIRELDRHILPNTAGCHTAKEAVLTAKMAREVFRTDWIKLEVIGHHDTLQPDVFALVEAAKILCDEGFEVFPYTTDDLVVAEKLLEAGCRVLMPWCAPIGSAMGPLNLTALKSMRARFPEVPLIVDAGIGRPSHAVTVMELGYDAVLLNTAVAGAGDPVGMAEAFARAIEAGHQAYLSGPLEPRDMAVPSTPVIGTAVFS.

Lys96 functions as the Schiff-base intermediate with DXP in the catalytic mechanism. 1-deoxy-D-xylulose 5-phosphate-binding positions include Gly157, 184–185, and 206–207; these read AG and NT.

It belongs to the ThiG family. Homotetramer. Forms heterodimers with either ThiH or ThiS.

It localises to the cytoplasm. The enzyme catalyses [ThiS sulfur-carrier protein]-C-terminal-Gly-aminoethanethioate + 2-iminoacetate + 1-deoxy-D-xylulose 5-phosphate = [ThiS sulfur-carrier protein]-C-terminal Gly-Gly + 2-[(2R,5Z)-2-carboxy-4-methylthiazol-5(2H)-ylidene]ethyl phosphate + 2 H2O + H(+). It participates in cofactor biosynthesis; thiamine diphosphate biosynthesis. In terms of biological role, catalyzes the rearrangement of 1-deoxy-D-xylulose 5-phosphate (DXP) to produce the thiazole phosphate moiety of thiamine. Sulfur is provided by the thiocarboxylate moiety of the carrier protein ThiS. In vitro, sulfur can be provided by H(2)S. This is Thiazole synthase from Agrobacterium fabrum (strain C58 / ATCC 33970) (Agrobacterium tumefaciens (strain C58)).